Consider the following 43-residue polypeptide: Seed non-specific lipid transfer protein-like (43 aa).

It belongs to the plant LTP family. In terms of assembly, homodimer.

In terms of biological role, plant non-specific lipid-transfer proteins transfer phospholipids as well as galactolipids across membranes. May play a role in wax or cutin deposition in the cell walls of expanding epidermal cells and certain secretory tissues. This isoform inhibits the hyphal growth of several fungi in vitro. This chain is Seed non-specific lipid transfer protein-like, found in Raphanus sativus (Radish).